The primary structure comprises 249 residues: Triosephosphate isomerase (249 aa).

9–11 (NWK) is a substrate binding site. Catalysis depends on His-94, which acts as the Electrophile. Glu-166 acts as the Proton acceptor in catalysis. Residues Gly-172, Ser-211, and 232–233 (GG) contribute to the substrate site.

The protein belongs to the triosephosphate isomerase family. In terms of assembly, homodimer.

The protein resides in the cytoplasm. It carries out the reaction D-glyceraldehyde 3-phosphate = dihydroxyacetone phosphate. It functions in the pathway carbohydrate biosynthesis; gluconeogenesis. Its pathway is carbohydrate degradation; glycolysis; D-glyceraldehyde 3-phosphate from glycerone phosphate: step 1/1. Involved in the gluconeogenesis. Catalyzes stereospecifically the conversion of dihydroxyacetone phosphate (DHAP) to D-glyceraldehyde-3-phosphate (G3P). The sequence is that of Triosephosphate isomerase from Chromohalobacter salexigens (strain ATCC BAA-138 / DSM 3043 / CIP 106854 / NCIMB 13768 / 1H11).